A 257-amino-acid polypeptide reads, in one-letter code: Imidazole glycerol phosphate synthase subunit HisF (257 aa).

Catalysis depends on residues Asp11 and Asp130.

It belongs to the HisA/HisF family. Heterodimer of HisH and HisF.

Its subcellular location is the cytoplasm. The enzyme catalyses 5-[(5-phospho-1-deoxy-D-ribulos-1-ylimino)methylamino]-1-(5-phospho-beta-D-ribosyl)imidazole-4-carboxamide + L-glutamine = D-erythro-1-(imidazol-4-yl)glycerol 3-phosphate + 5-amino-1-(5-phospho-beta-D-ribosyl)imidazole-4-carboxamide + L-glutamate + H(+). It participates in amino-acid biosynthesis; L-histidine biosynthesis; L-histidine from 5-phospho-alpha-D-ribose 1-diphosphate: step 5/9. Functionally, IGPS catalyzes the conversion of PRFAR and glutamine to IGP, AICAR and glutamate. The HisF subunit catalyzes the cyclization activity that produces IGP and AICAR from PRFAR using the ammonia provided by the HisH subunit. The chain is Imidazole glycerol phosphate synthase subunit HisF from Aeromonas hydrophila subsp. hydrophila (strain ATCC 7966 / DSM 30187 / BCRC 13018 / CCUG 14551 / JCM 1027 / KCTC 2358 / NCIMB 9240 / NCTC 8049).